The primary structure comprises 175 residues: MATGPRYFVPFRRRHEGKTDYYKRMSLLSSGTPRMVVRKTNRQIIVQLVVPEVEGDSTLVAAYSAELAGYGYEGSTASTPAAYLTGMLFAVKALNAGYGEAILDIGLARAKPGARVFAALKGAVDAGLDVPYGESILPDEERLKGAHIAEYAPERAGDLVTNVEAVALAIKKELV.

This sequence belongs to the universal ribosomal protein uL18 family. Part of the 50S ribosomal subunit. Contacts the 5S and 23S rRNAs.

Functionally, this is one of the proteins that bind and probably mediate the attachment of the 5S RNA into the large ribosomal subunit, where it forms part of the central protuberance. The protein is Large ribosomal subunit protein uL18 of Methanoculleus marisnigri (strain ATCC 35101 / DSM 1498 / JR1).